Here is a 273-residue protein sequence, read N- to C-terminus: Putative pyruvate, phosphate dikinase regulatory protein (273 aa).

ADP is bound at residue 149–156 (GPSRTSKT).

Belongs to the pyruvate, phosphate/water dikinase regulatory protein family. PDRP subfamily.

The enzyme catalyses N(tele)-phospho-L-histidyl/L-threonyl-[pyruvate, phosphate dikinase] + ADP = N(tele)-phospho-L-histidyl/O-phospho-L-threonyl-[pyruvate, phosphate dikinase] + AMP + H(+). The catalysed reaction is N(tele)-phospho-L-histidyl/O-phospho-L-threonyl-[pyruvate, phosphate dikinase] + phosphate + H(+) = N(tele)-phospho-L-histidyl/L-threonyl-[pyruvate, phosphate dikinase] + diphosphate. Functionally, bifunctional serine/threonine kinase and phosphorylase involved in the regulation of the pyruvate, phosphate dikinase (PPDK) by catalyzing its phosphorylation/dephosphorylation. The chain is Putative pyruvate, phosphate dikinase regulatory protein from Rickettsia massiliae (strain Mtu5).